The primary structure comprises 328 residues: uncharacterized protein (328 aa).

A signal peptide spans 1–25 (MKLFNFKKLSMLIAGFTLVTSPALA).

Belongs to the bacterial solute-binding protein 7 family.

It is found in the periplasm. This is an uncharacterized protein from Haemophilus influenzae (strain ATCC 51907 / DSM 11121 / KW20 / Rd).